Reading from the N-terminus, the 177-residue chain is Ribulose bisphosphate carboxylase small subunit, chloroplastic 6 (177 aa).

The transit peptide at 1-56 directs the protein to the chloroplast; that stretch reads MASSMMASTAAVARVGPAQTNMVAPFNGLRSSVAFPATRKANNDLSTLPSNGGRVS.

This sequence belongs to the RuBisCO small chain family. In terms of assembly, heterohexadecamer of 8 large and 8 small subunits.

The protein localises to the plastid. It is found in the chloroplast. In terms of biological role, ruBisCO catalyzes two reactions: the carboxylation of D-ribulose 1,5-bisphosphate, the primary event in carbon dioxide fixation, as well as the oxidative fragmentation of the pentose substrate. Both reactions occur simultaneously and in competition at the same active site. Although the small subunit is not catalytic it is essential for maximal activity. This is Ribulose bisphosphate carboxylase small subunit, chloroplastic 6 from Lemna gibba (Swollen duckweed).